The chain runs to 420 residues: ATP phosphoribosyltransferase regulatory subunit (420 aa).

The protein belongs to the class-II aminoacyl-tRNA synthetase family. HisZ subfamily. Heteromultimer composed of HisG and HisZ subunits.

It is found in the cytoplasm. Its pathway is amino-acid biosynthesis; L-histidine biosynthesis; L-histidine from 5-phospho-alpha-D-ribose 1-diphosphate: step 1/9. Its function is as follows. Required for the first step of histidine biosynthesis. May allow the feedback regulation of ATP phosphoribosyltransferase activity by histidine. The polypeptide is ATP phosphoribosyltransferase regulatory subunit (Bacillus thuringiensis (strain Al Hakam)).